A 666-amino-acid chain; its full sequence is Calpain-10 (666 aa).

In terms of domain architecture, Calpain catalytic spans 13–321; that stretch reads LFRDAAFPAS…FDEVTIGYPV (309 aa). Active-site residues include C73, H238, and N263. 2 domain III regions span residues 322–488 and 507–648; these read TEAG…ISLS and EWET…IHSQ.

It belongs to the peptidase C2 family. In terms of tissue distribution, ubiquitous.

It is found in the cytoplasm. The protein resides in the nucleus. Its function is as follows. Calcium-regulated non-lysosomal thiol-protease which catalyzes limited proteolysis of substrates involved in cytoskeletal remodeling and signal transduction. May play a role in insulin-stimulated glucose uptake. This Rattus norvegicus (Rat) protein is Calpain-10 (Capn10).